Here is a 189-residue protein sequence, read N- to C-terminus: uncharacterized protein (189 aa).

Residues 2-62 (RPTNKRILDA…ALLSQHSSNR (61 aa)) enclose the HTH tetR-type domain. Residues 25–44 (TTKEIAEKANVSEATIFRNF) constitute a DNA-binding region (H-T-H motif).

This is an uncharacterized protein from Bacillus subtilis (strain 168).